The sequence spans 240 residues: Probable alpha-aspartyl dipeptidase (240 aa).

Active-site charge relay system residues include Ser125, Asp140, and His162.

Belongs to the peptidase S51 family.

It is found in the cytoplasm. It catalyses the reaction Dipeptidase E catalyzes the hydrolysis of dipeptides Asp-|-Xaa. It does not act on peptides with N-terminal Glu, Asn or Gln, nor does it cleave isoaspartyl peptides.. In terms of biological role, hydrolyzes dipeptides containing N-terminal aspartate residues. The polypeptide is Probable alpha-aspartyl dipeptidase (Drosophila melanogaster (Fruit fly)).